A 233-amino-acid polypeptide reads, in one-letter code: 2-C-methyl-D-erythritol 4-phosphate cytidylyltransferase (233 aa).

It belongs to the IspD/TarI cytidylyltransferase family. IspD subfamily.

The enzyme catalyses 2-C-methyl-D-erythritol 4-phosphate + CTP + H(+) = 4-CDP-2-C-methyl-D-erythritol + diphosphate. It functions in the pathway isoprenoid biosynthesis; isopentenyl diphosphate biosynthesis via DXP pathway; isopentenyl diphosphate from 1-deoxy-D-xylulose 5-phosphate: step 2/6. In terms of biological role, catalyzes the formation of 4-diphosphocytidyl-2-C-methyl-D-erythritol from CTP and 2-C-methyl-D-erythritol 4-phosphate (MEP). This is 2-C-methyl-D-erythritol 4-phosphate cytidylyltransferase from Geotalea uraniireducens (strain Rf4) (Geobacter uraniireducens).